The sequence spans 725 residues: Fatty acid oxidation complex subunit alpha (725 aa).

An enoyl-CoA hydratase/isomerase region spans residues 1–189 (MIYQGENLSV…ALGMIDGVVS (189 aa)). Asp296 is a substrate binding site. Positions 311-725 (EPVTSAAVLG…APQSLSAPSA (415 aa)) are 3-hydroxyacyl-CoA dehydrogenase. Residues Met324, Asp343, 400-402 (VVE), Lys407, and Ser429 each bind NAD(+). Catalysis depends on His450, which acts as the For 3-hydroxyacyl-CoA dehydrogenase activity. Asn453 is a binding site for NAD(+). Substrate is bound by residues Asn500 and Tyr660.

It in the N-terminal section; belongs to the enoyl-CoA hydratase/isomerase family. This sequence in the C-terminal section; belongs to the 3-hydroxyacyl-CoA dehydrogenase family. As to quaternary structure, heterotetramer of two alpha chains (FadB) and two beta chains (FadA).

It catalyses the reaction a (3S)-3-hydroxyacyl-CoA + NAD(+) = a 3-oxoacyl-CoA + NADH + H(+). The catalysed reaction is a (3S)-3-hydroxyacyl-CoA = a (2E)-enoyl-CoA + H2O. The enzyme catalyses a 4-saturated-(3S)-3-hydroxyacyl-CoA = a (3E)-enoyl-CoA + H2O. It carries out the reaction (3S)-3-hydroxybutanoyl-CoA = (3R)-3-hydroxybutanoyl-CoA. It catalyses the reaction a (3Z)-enoyl-CoA = a 4-saturated (2E)-enoyl-CoA. The catalysed reaction is a (3E)-enoyl-CoA = a 4-saturated (2E)-enoyl-CoA. It functions in the pathway lipid metabolism; fatty acid beta-oxidation. Functionally, involved in the aerobic and anaerobic degradation of long-chain fatty acids via beta-oxidation cycle. Catalyzes the formation of 3-oxoacyl-CoA from enoyl-CoA via L-3-hydroxyacyl-CoA. It can also use D-3-hydroxyacyl-CoA and cis-3-enoyl-CoA as substrate. In Aliivibrio fischeri (strain MJ11) (Vibrio fischeri), this protein is Fatty acid oxidation complex subunit alpha.